We begin with the raw amino-acid sequence, 618 residues long: Dihydroxy-acid dehydratase (618 aa).

D81 is a Mg(2+) binding site. C122 is a binding site for [2Fe-2S] cluster. Mg(2+)-binding residues include D123 and K124. Position 124 is an N6-carboxylysine (K124). Residue C195 participates in [2Fe-2S] cluster binding. E491 contacts Mg(2+). S517 serves as the catalytic Proton acceptor.

It belongs to the IlvD/Edd family. Homodimer. [2Fe-2S] cluster is required as a cofactor. The cofactor is Mg(2+).

The enzyme catalyses (2R)-2,3-dihydroxy-3-methylbutanoate = 3-methyl-2-oxobutanoate + H2O. The catalysed reaction is (2R,3R)-2,3-dihydroxy-3-methylpentanoate = (S)-3-methyl-2-oxopentanoate + H2O. It functions in the pathway amino-acid biosynthesis; L-isoleucine biosynthesis; L-isoleucine from 2-oxobutanoate: step 3/4. The protein operates within amino-acid biosynthesis; L-valine biosynthesis; L-valine from pyruvate: step 3/4. Functions in the biosynthesis of branched-chain amino acids. Catalyzes the dehydration of (2R,3R)-2,3-dihydroxy-3-methylpentanoate (2,3-dihydroxy-3-methylvalerate) into 2-oxo-3-methylpentanoate (2-oxo-3-methylvalerate) and of (2R)-2,3-dihydroxy-3-methylbutanoate (2,3-dihydroxyisovalerate) into 2-oxo-3-methylbutanoate (2-oxoisovalerate), the penultimate precursor to L-isoleucine and L-valine, respectively. The polypeptide is Dihydroxy-acid dehydratase (Rhodopseudomonas palustris (strain TIE-1)).